A 95-amino-acid chain; its full sequence is Co-chaperonin GroES (95 aa).

This sequence belongs to the GroES chaperonin family. Heptamer of 7 subunits arranged in a ring. Interacts with the chaperonin GroEL.

Its subcellular location is the cytoplasm. In terms of biological role, together with the chaperonin GroEL, plays an essential role in assisting protein folding. The GroEL-GroES system forms a nano-cage that allows encapsulation of the non-native substrate proteins and provides a physical environment optimized to promote and accelerate protein folding. GroES binds to the apical surface of the GroEL ring, thereby capping the opening of the GroEL channel. The sequence is that of Co-chaperonin GroES from Chlorobaculum tepidum (strain ATCC 49652 / DSM 12025 / NBRC 103806 / TLS) (Chlorobium tepidum).